Here is a 506-residue protein sequence, read N- to C-terminus: Maturase K (506 aa).

This sequence belongs to the intron maturase 2 family. MatK subfamily.

It is found in the plastid. It localises to the chloroplast. Its function is as follows. Usually encoded in the trnK tRNA gene intron. Probably assists in splicing its own and other chloroplast group II introns. The sequence is that of Maturase K from Lathyrus aphaca (Yellow vetchling).